We begin with the raw amino-acid sequence, 161 residues long: Nucleotide-binding protein lpl1175 (161 aa).

It belongs to the YajQ family.

Its function is as follows. Nucleotide-binding protein. The protein is Nucleotide-binding protein lpl1175 of Legionella pneumophila (strain Lens).